Reading from the N-terminus, the 116-residue chain is MPRSVNHVASKARRKKILKLTRGYFGARKNVWTVAKNTWEKGLTYAFRDRRNKKRNFRALWIQRINAAARLEGMSYSKLMGGLHKAGIEINRKVLADLAMNHPEAFKAVVAKAKAA.

This sequence belongs to the bacterial ribosomal protein bL20 family.

Its function is as follows. Binds directly to 23S ribosomal RNA and is necessary for the in vitro assembly process of the 50S ribosomal subunit. It is not involved in the protein synthesizing functions of that subunit. This Bacteroides thetaiotaomicron (strain ATCC 29148 / DSM 2079 / JCM 5827 / CCUG 10774 / NCTC 10582 / VPI-5482 / E50) protein is Large ribosomal subunit protein bL20.